The following is a 244-amino-acid chain: Krueppel-like factor 9 (244 aa).

Disordered stretches follow at residues 24-51 and 79-143; these read VPEH…GDPG and PSVC…EKRH. Positions 32–51 are enriched in basic and acidic residues; it reads DAERLRLPEREVTKEHGDPG. The residue at position 122 (serine 122) is a Phosphoserine. Basic residues predominate over residues 134 to 143; that stretch reads KGKHASEKRH. 3 C2H2-type zinc fingers span residues 143 to 167, 173 to 197, and 203 to 225; these read HKCP…YRVH, FPCT…YRTH, and FRCP…ARRH.

It belongs to the Sp1 C2H2-type zinc-finger protein family. As to quaternary structure, interacts with ZZEF1.

It is found in the nucleus. In terms of biological role, transcription factor that binds to GC box promoter elements. Selectively activates mRNA synthesis from genes containing tandem repeats of GC boxes but represses genes with a single GC box. Acts as an epidermal circadian transcription factor regulating keratinocyte proliferation. This is Krueppel-like factor 9 (Klf9) from Rattus norvegicus (Rat).